A 57-amino-acid chain; its full sequence is Large ribosomal subunit protein eL20 (57 aa).

This sequence belongs to the eukaryotic ribosomal protein eL20 family. As to quaternary structure, part of the 50S ribosomal subunit. Binds 23S rRNA.

This Natronomonas pharaonis (strain ATCC 35678 / DSM 2160 / CIP 103997 / JCM 8858 / NBRC 14720 / NCIMB 2260 / Gabara) (Halobacterium pharaonis) protein is Large ribosomal subunit protein eL20.